The chain runs to 627 residues: MIYDYGYDVIVVGGGHAGVEAASASARIGAKTLLLTHNIDTIGQMSCNPAIGGIGKGHLVKEIDAMGGVMAKAIDMAGIQFRILNSRKGPAVRATRAQADRVLYKKAINSLINNQENLDIFQDSVDDLVVENNTVCGAITKTGITFRAKKVVLTVGTFLGGKIHIGKVSNAGGRAGDQPSNALAARLRSLPFRVDRLKTGTPPRIDRRSVDFSVMEVQHGDNPTPYFSFFSKGKIEHPRQIPCYITYTNNETHKIITDNLDKSAMYSGLIEGIGPRYCPSIEDKVVRFADKERHQIFVEPEGLNSIELYPNGLSTSLPFEVQCNYIRSIKGFEKAFIMRPGYAIEYDFFDPRDLKPTLETKHIKNLYFAGQINGTTGYEEAGAQGLVAGINAAISIDSDKSWYPTRADSYIGVLIDDLITKGTKEPYRMFTSRAEYRLILREDNADLRLSDKACELGLLSKEDQQHFISKKNAIIENIAMMKNTWIGPQTQKARDLEKFLDKKMTRESTLFDLLKRPEIDYSKLQQISELNLNLQDEAVIEQIEISAKYSGYIERQNKDIEKTATLEQKAIPTDFNYSQVKGLSNEVLQKLTEQKPTTLGEASRIPGITPAAISLLTIYMKKTGFIK.

FAD-binding positions include 13–18, Val-125, and Ser-180; that span reads GGGHAG. 274-288 is a binding site for NAD(+); the sequence is GPRYCPSIEDKVVRF. An FAD-binding site is contributed by Gln-371.

This sequence belongs to the MnmG family. Homodimer. Heterotetramer of two MnmE and two MnmG subunits. FAD serves as cofactor.

It is found in the cytoplasm. Its function is as follows. NAD-binding protein involved in the addition of a carboxymethylaminomethyl (cmnm) group at the wobble position (U34) of certain tRNAs, forming tRNA-cmnm(5)s(2)U34. The sequence is that of tRNA uridine 5-carboxymethylaminomethyl modification enzyme MnmG from Francisella tularensis subsp. novicida (strain U112).